The following is a 160-amino-acid chain: Nucleotide-binding protein VFMJ11_1323 (160 aa).

This sequence belongs to the YajQ family.

Functionally, nucleotide-binding protein. In Aliivibrio fischeri (strain MJ11) (Vibrio fischeri), this protein is Nucleotide-binding protein VFMJ11_1323.